A 253-amino-acid chain; its full sequence is DNA repair protein RecO (253 aa).

It belongs to the RecO family.

Its function is as follows. Involved in DNA repair and RecF pathway recombination. The chain is DNA repair protein RecO from Nitrobacter hamburgensis (strain DSM 10229 / NCIMB 13809 / X14).